A 404-amino-acid chain; its full sequence is Glucose-1-phosphate adenylyltransferase (404 aa).

Residues tyrosine 99, glycine 164, 179-180 (EK), and serine 197 contribute to the alpha-D-glucose 1-phosphate site.

It belongs to the bacterial/plant glucose-1-phosphate adenylyltransferase family.

It catalyses the reaction alpha-D-glucose 1-phosphate + ATP + H(+) = ADP-alpha-D-glucose + diphosphate. Its pathway is capsule biogenesis; capsule polysaccharide biosynthesis. The protein operates within glycan biosynthesis; glycogen biosynthesis. Functionally, involved in the biosynthesis of ADP-glucose, a building block, required in the biosynthesis of maltose-1-phosphate (M1P) and in the elongation reactions to produce linear alpha-1,4-glucans. Catalyzes the reaction between ATP and alpha-D-glucose 1-phosphate (G1P) to produce pyrophosphate and ADP-Glc. The chain is Glucose-1-phosphate adenylyltransferase from Mycobacterium ulcerans (strain Agy99).